A 197-amino-acid chain; its full sequence is uncharacterized protein (197 aa).

A run of 4 helical transmembrane segments spans residues 30-50, 61-81, 101-121, and 130-150; these read WVAMGATAITVLAGAHIVEMA, LVAGASVVFWAFGPWLIPPLV, LWSVVFPLGMYGVGAYRLGLA, and IGEFEGWVALAVWTITFVAML.

Its subcellular location is the cell membrane. This is an uncharacterized protein from Mycobacterium tuberculosis (strain CDC 1551 / Oshkosh).